The chain runs to 341 residues: D-aspartate oxidase (341 aa).

FAD contacts are provided by aspartate 36, arginine 37, threonine 43, serine 44, methionine 50, glycine 307, isoleucine 311, and serine 312. The short motif at 339–341 (SKL) is the Microbody targeting signal element.

This sequence belongs to the DAMOX/DASOX family. Dimer or tetramer. Interacts with PEX5; the interaction is direct and required for localization of DDO to the peroxisome. The cofactor is FAD. In terms of tissue distribution, expressed in the small intestine (at protein level). Expressed in the ependymal cell layer of the telencephalic ventricles, hippocampus, thalamus, cerebellum, midbrain region, pons, olfactory bulbs, and cortex. Repressed in the testis. Expressed in the kidney, liver, stomach, pancreas, uterus, lactating breast, involuting mammary gland, brain, heart, lung, and skin. As to expression, expressed in kidney, liver, pancreas, and in the mammary gland regardless of lactation status.

The protein resides in the peroxisome matrix. Its subcellular location is the cytoplasm. It is found in the cytosol. It carries out the reaction D-aspartate + O2 + H2O = oxaloacetate + H2O2 + NH4(+). The catalysed reaction is D-glutamate + O2 + H2O = H2O2 + 2-oxoglutarate + NH4(+). Inhibited by the benzodiazepine olanzapine; chronic systemic administration of the benzodiazepine increases levels of D-aspartate and L-glutamate in the prefrontal cortex. Efficiently inhibited by 5-aminonicotinic acid (5-AN) and 1,4-Dihydropyrido[2,3-b]pyrazine-2,3-dione (DPPD). Inhibited by aminooxyacetic acid, thiolactomycin, anthranilic acid, malonate, meso-tartrate and L-tartrate. Benzoate has no effect on activity. In terms of biological role, selectively catalyzes the oxidative deamination of acidic amino acids. Suppresses the level of D-aspartate in the brain, an amino acid that can act as an agonist for glutamate receptors. Protects the organism from the toxicity of D-amino acids. May also function in the intestine. Functionally, selectively catalyzes the oxidative deamination of acidic amino acids. Its function is as follows. Does not exhibit D-aspartate oxidase activity. In Mus musculus (Mouse), this protein is D-aspartate oxidase (Ddo).